The chain runs to 216 residues: MGPSSSYPRVVAVLNGKGGVGKTTTAVNLAAALAAKERVLLVDADPQGSASWWAERGTAALGFDLAQETNPRLLESLREVGGYSLVVVDTPPALDSAALAAVVQAADQLVLPTPPAPLDLAVLIETVHRAVLPSGTSHRVLLTRVDPRSLGEAVEAQRTLRERGIPAFEAFIRAYKAHERAALEGLSILQWRGKNAREAEADYRRVAEELDRDWRK.

The ATP site is built by Gly-18, Gly-19, Gly-21, Lys-22, Thr-23, Thr-24, and Gln-47. Thr-23 lines the Mg(2+) pocket.

This sequence belongs to the ParA family. McdA subfamily. In terms of assembly, homodimerizes in the presence of ATP. Each subunit binds 1 ATP molecule; some residues cross the dimer interface to contact ATP in the other subunit. Forms a complex with McdB.

Its subcellular location is the cytoplasm. The protein resides in the nucleoid. It catalyses the reaction ATP + H2O = ADP + phosphate + H(+). McdA and McdB together mediate carboxysome (Cb) spacing, size, ultrastructure and probably inheritance in the cell, together they prevent Cb aggregation. McdA is an ATPase that forms dynamic gradients on the nucleoid in response to adapter protein McdB, which associates with carboxysomes. The interplay between McdA gradients on the nucleoid and McdB-bound carboxysomes result in the equal spacing of Cbs along the cell length. In terms of biological role, incorrect positioning (aggregation) of carboxysomes results in reduced CO(2) fixation by encapsulated ribulose-1,5-bisphosphate carboxylase (RuBisCO, cbbL/cbbS), which leads to slower growth. This is Maintenance of carboxysome distribution protein A from Gloeobacter kilaueensis (strain ATCC BAA-2537 / CCAP 1431/1 / ULC 316 / JS1).